Here is a 657-residue protein sequence, read N- to C-terminus: tRNA 5-methylaminomethyl-2-thiouridine biosynthesis bifunctional protein MnmC (657 aa).

The tract at residues 1–239 (MTDRIVPATL…KRAMLVGEFA (239 aa)) is tRNA (mnm(5)s(2)U34)-methyltransferase. Residues 263–657 (IGAGLAGCAV…VRALRHGRVA (395 aa)) are FAD-dependent cmnm(5)s(2)U34 oxidoreductase.

It in the N-terminal section; belongs to the methyltransferase superfamily. tRNA (mnm(5)s(2)U34)-methyltransferase family. This sequence in the C-terminal section; belongs to the DAO family. FAD serves as cofactor.

The protein resides in the cytoplasm. It carries out the reaction 5-aminomethyl-2-thiouridine(34) in tRNA + S-adenosyl-L-methionine = 5-methylaminomethyl-2-thiouridine(34) in tRNA + S-adenosyl-L-homocysteine + H(+). Catalyzes the last two steps in the biosynthesis of 5-methylaminomethyl-2-thiouridine (mnm(5)s(2)U) at the wobble position (U34) in tRNA. Catalyzes the FAD-dependent demodification of cmnm(5)s(2)U34 to nm(5)s(2)U34, followed by the transfer of a methyl group from S-adenosyl-L-methionine to nm(5)s(2)U34, to form mnm(5)s(2)U34. The sequence is that of tRNA 5-methylaminomethyl-2-thiouridine biosynthesis bifunctional protein MnmC from Burkholderia mallei (strain SAVP1).